Reading from the N-terminus, the 505-residue chain is ATP synthase subunit beta (505 aa).

158–165 (GGAGVGKT) is a binding site for ATP.

It belongs to the ATPase alpha/beta chains family. F-type ATPases have 2 components, CF(1) - the catalytic core - and CF(0) - the membrane proton channel. CF(1) has five subunits: alpha(3), beta(3), gamma(1), delta(1), epsilon(1). CF(0) has three main subunits: a(1), b(2) and c(9-12). The alpha and beta chains form an alternating ring which encloses part of the gamma chain. CF(1) is attached to CF(0) by a central stalk formed by the gamma and epsilon chains, while a peripheral stalk is formed by the delta and b chains.

The protein resides in the cell inner membrane. It carries out the reaction ATP + H2O + 4 H(+)(in) = ADP + phosphate + 5 H(+)(out). Its function is as follows. Produces ATP from ADP in the presence of a proton gradient across the membrane. The catalytic sites are hosted primarily by the beta subunits. In Parabacteroides distasonis (strain ATCC 8503 / DSM 20701 / CIP 104284 / JCM 5825 / NCTC 11152), this protein is ATP synthase subunit beta.